Consider the following 296-residue polypeptide: Ribosomal RNA small subunit methyltransferase A (296 aa).

S-adenosyl-L-methionine contacts are provided by Asn32, Leu34, Gly59, Glu80, Asp105, and Asn130.

Belongs to the class I-like SAM-binding methyltransferase superfamily. rRNA adenine N(6)-methyltransferase family. RsmA subfamily.

It is found in the cytoplasm. The catalysed reaction is adenosine(1518)/adenosine(1519) in 16S rRNA + 4 S-adenosyl-L-methionine = N(6)-dimethyladenosine(1518)/N(6)-dimethyladenosine(1519) in 16S rRNA + 4 S-adenosyl-L-homocysteine + 4 H(+). Functionally, specifically dimethylates two adjacent adenosines (A1518 and A1519) in the loop of a conserved hairpin near the 3'-end of 16S rRNA in the 30S particle. May play a critical role in biogenesis of 30S subunits. This chain is Ribosomal RNA small subunit methyltransferase A, found in Levilactobacillus brevis (strain ATCC 367 / BCRC 12310 / CIP 105137 / JCM 1170 / LMG 11437 / NCIMB 947 / NCTC 947) (Lactobacillus brevis).